A 277-amino-acid polypeptide reads, in one-letter code: Large ribosomal subunit protein uL2 (277 aa).

Disordered regions lie at residues 32–58 (KSLTKGKKLKSGRDSSGRISIRRRGGG) and 225–277 (VAMN…RRNK). A compositionally biased stretch (basic residues) spans 258–277 (YKTRKKKRYSDKFIIKRRNK).

Belongs to the universal ribosomal protein uL2 family. As to quaternary structure, part of the 50S ribosomal subunit. Forms a bridge to the 30S subunit in the 70S ribosome.

One of the primary rRNA binding proteins. Required for association of the 30S and 50S subunits to form the 70S ribosome, for tRNA binding and peptide bond formation. It has been suggested to have peptidyltransferase activity; this is somewhat controversial. Makes several contacts with the 16S rRNA in the 70S ribosome. This is Large ribosomal subunit protein uL2 from Borrelia garinii subsp. bavariensis (strain ATCC BAA-2496 / DSM 23469 / PBi) (Borreliella bavariensis).